We begin with the raw amino-acid sequence, 406 residues long: FBD-associated F-box protein At1g60410 (406 aa).

One can recognise an F-box domain in the interval 9–59 (KDRLSDLPCHLLCRILSNLSTKESVRTSVLSPRWSNLWSLVSVLDLDFQDF). An FBD domain is found at 355 to 405 (MEEIKLSPVPQCVLSSLDFLQLKAPSTPSKMKLATYFRKKCTRLTKMLLSG).

This Arabidopsis thaliana (Mouse-ear cress) protein is FBD-associated F-box protein At1g60410.